The primary structure comprises 339 residues: GTPase Obg (339 aa).

Residues 1–159 enclose the Obg domain; the sequence is MKFVDEAFVR…RELKLELKLL (159 aa). Positions 127-147 are disordered; it reads NTHFKSSTNRAPRRTTSGEEG. The OBG-type G domain maps to 160-333; the sequence is ADVGLLGLPN…LCYDLMSFLE (174 aa). GTP-binding positions include 166 to 173, 191 to 195, 213 to 216, 283 to 286, and 314 to 316; these read GLPNAGKS, FTTLY, DIPG, NKID, and SAI. Mg(2+) contacts are provided by Ser-173 and Thr-193.

It belongs to the TRAFAC class OBG-HflX-like GTPase superfamily. OBG GTPase family. Monomer. Requires Mg(2+) as cofactor.

It localises to the cytoplasm. Its function is as follows. An essential GTPase which binds GTP, GDP and possibly (p)ppGpp with moderate affinity, with high nucleotide exchange rates and a fairly low GTP hydrolysis rate. Plays a role in control of the cell cycle, stress response, ribosome biogenesis and in those bacteria that undergo differentiation, in morphogenesis control. This chain is GTPase Obg, found in Coxiella burnetii (strain CbuG_Q212) (Coxiella burnetii (strain Q212)).